A 1343-amino-acid polypeptide reads, in one-letter code: Spermatogenesis-associated protein 31A6 (1343 aa).

A helical membrane pass occupies residues 23–43; it reads PWVLDIFLTLVFALGFFFLLL. Disordered stretches follow at residues 55–88, 106–235, 624–654, 895–951, 1080–1156, and 1309–1331; these read PSPS…RECP, GPHL…STLI, DESP…EAQK, PRGI…REAV, VQEE…PPSV, and KAVS…SHHH. Residues 60–82 show a composition bias toward basic residues; it reads GKRKCPVGRRRRPRGRMKNHSLR. The span at 165–178 shows a compositional bias: polar residues; sequence LASTPSPGPMTTSV. Residues 198 to 222 are compositionally biased toward pro residues; that stretch reads PEPPALFPHPPHTPDPLACSPPPPK. Composition is skewed to polar residues over residues 627-647 and 923-944; these read PGTS…STGE and LTYS…SSKA. Basic and acidic residues-rich tracts occupy residues 1104–1123 and 1133–1142; these read HKSE…RLEG and RKTEDTHQDE.

The protein belongs to the SPATA31 family.

The protein resides in the membrane. In terms of biological role, may play a role in spermatogenesis. In Homo sapiens (Human), this protein is Spermatogenesis-associated protein 31A6 (SPATA31A6).